The chain runs to 118 residues: Hisactophilin-2 (118 aa).

The N-myristoyl glycine moiety is linked to residue Gly-2. The interval 8–109 is contains several HHXH repeats; that stretch reads AHNGHYLSAE…HVSTSHHHDH (102 aa). 2 consecutive repeat copies span residues 34–46 and 74–86. Residues 34-86 are 2 X 13 AA approximate repeats; it reads FHIENHGSKVALRTHCGKYVSIGDHKQVYLSHHLHGDHSLFHLEHHHGKVSIK. A disordered region spans residues 99 to 118; that stretch reads GHVSTSHHHDHHATFEEHIL.

It belongs to the hisactophilin family. As to quaternary structure, homodimer or heterodimer of hatA and hatB, linked by a disulfide bond. In terms of processing, phosphorylated.

The protein localises to the cytoplasm. The protein resides in the cell membrane. Its function is as follows. May act as an intracellular pH sensor that links chemotactic signals to responses in the microfilament system of the cells by nucleating actin polymerization or stabilizing the filaments. The polypeptide is Hisactophilin-2 (hatB) (Dictyostelium discoideum (Social amoeba)).